A 154-amino-acid polypeptide reads, in one-letter code: Anti-sigma-E factor RseA (154 aa).

Thr39 bears the Phosphothreonine; by PknB mark. His66, Cys70, and Cys73 together coordinate Zn(2+). Positions 104 to 154 are disordered; the sequence is SEIPRCPPEGPSKGSSGGSSQGPPDGAAAGFGDRFADGDGGNRGRQSRVRR. The span at 124-136 shows a compositional bias: low complexity; the sequence is QGPPDGAAAGFGD.

Belongs to the zinc-associated anti-sigma factor (ZAS) superfamily. In terms of assembly, interacts with cognate ECF RNA polymerase sigma factor SigE under reducing conditions; this inhibits the interaction of SigE with the RNA polymerase catalytic core. Requires Zn(2+) as cofactor. In terms of processing, phosphorylated by PknB on Thr-39; can be dephosphorylated (at least in vitro) by PstP. Phosphorylation is the signal for subsequent degradation by the ClpC1-ClpP2 complex. Degraded following vancomycin treatment (surface stress) by a ClpC1-ClpP2 complex.

It localises to the cytoplasm. Functionally, an anti-sigma factor for extracytoplasmic function (ECF) sigma factor SigE. ECF sigma factors are held in an inactive form by an anti-sigma factor. In Mycobacterium tuberculosis (strain ATCC 25618 / H37Rv), this protein is Anti-sigma-E factor RseA (rseA).